The sequence spans 152 residues: uncharacterized protein (152 aa).

Residues 1–16 form the signal peptide; that stretch reads MRKLLISLALAIPVFA. One can recognise a Cytochrome c domain in the interval 20-135; the sequence is NLLQKGYEVY…AVAYWLYHNY (116 aa). Heme c-binding residues include Cys-33, Cys-36, and His-37.

This is an uncharacterized protein from Aquifex aeolicus (strain VF5).